A 393-amino-acid polypeptide reads, in one-letter code: Chorismate synthase (393 aa).

2 residues coordinate NADP(+): arginine 40 and arginine 46. FMN is bound by residues 129–131 (RSS), 249–250 (QA), glycine 301, 316–320 (KPIPT), and arginine 342.

Belongs to the chorismate synthase family. Homotetramer. FMNH2 is required as a cofactor.

The catalysed reaction is 5-O-(1-carboxyvinyl)-3-phosphoshikimate = chorismate + phosphate. It participates in metabolic intermediate biosynthesis; chorismate biosynthesis; chorismate from D-erythrose 4-phosphate and phosphoenolpyruvate: step 7/7. Functionally, catalyzes the anti-1,4-elimination of the C-3 phosphate and the C-6 proR hydrogen from 5-enolpyruvylshikimate-3-phosphate (EPSP) to yield chorismate, which is the branch point compound that serves as the starting substrate for the three terminal pathways of aromatic amino acid biosynthesis. This reaction introduces a second double bond into the aromatic ring system. The protein is Chorismate synthase of Geotalea uraniireducens (strain Rf4) (Geobacter uraniireducens).